Consider the following 416-residue polypeptide: uncharacterized protein (416 aa).

[4Fe-4S] cluster is bound by residues C63, C75, C78, and C152. 4 residues coordinate S-adenosyl-L-methionine: Q253, F280, E300, and D348. The active-site Nucleophile is C374.

This sequence belongs to the class I-like SAM-binding methyltransferase superfamily. RNA M5U methyltransferase family.

This is an uncharacterized protein from Agrobacterium fabrum (strain C58 / ATCC 33970) (Agrobacterium tumefaciens (strain C58)).